A 437-amino-acid chain; its full sequence is Aspartate aminotransferase, mitochondrial (437 aa).

3 residues coordinate L-aspartate: Gly72, Trp167, and Asn220. Lys284 is modified (N6-(pyridoxal phosphate)lysine). Position 413 (Arg413) interacts with L-aspartate.

This sequence belongs to the class-I pyridoxal-phosphate-dependent aminotransferase family. As to quaternary structure, homodimer. Pyridoxal 5'-phosphate serves as cofactor.

The protein localises to the mitochondrion matrix. It catalyses the reaction L-aspartate + 2-oxoglutarate = oxaloacetate + L-glutamate. Its function is as follows. Plays a key role in amino acid metabolism. Important for metabolite exchange between mitochondria and cytosol. In Schizosaccharomyces pombe (strain 972 / ATCC 24843) (Fission yeast), this protein is Aspartate aminotransferase, mitochondrial.